The following is a 485-amino-acid chain: Otoconin-90 (485 aa).

The first 17 residues, 1-17 (MIMLLMVGMLMAPCVGA), serve as a signal peptide directing secretion. Asn-37 carries an N-linked (GlcNAc...) asparagine glycan. The interval 75–189 (LLQFVNSMRC…SLNFLDASFC (115 aa)) is phospholipase A2-like 1. 7 disulfides stabilise this stretch: Cys-84–Cys-144, Cys-98–Cys-189, Cys-100–Cys-116, Cys-115–Cys-171, Cys-122–Cys-164, Cys-131–Cys-157, and Cys-151–Cys-162. Residues Asn-178 and Asn-288 are each glycosylated (N-linked (GlcNAc...) asparagine). Phospholipase A2-like stretches follow at residues 315–371 (MLQL…QVGC) and 383–435 (CEDH…PVSC). Asn-417 carries N-linked (GlcNAc...) asparagine glycosylation. The tract at residues 444 to 485 (LASSVDSSSEENSEEAPPQMERLRRFLEKPPGPLGARPLGGK) is disordered.

This sequence belongs to the phospholipase A2 family. In terms of assembly, interacts with OTOL1. In terms of tissue distribution, in the embryo, highly expressed in the developing otocyst with weak expression in the brain. Also expressed in nonsensory epithelia of both the vestibular and cochlear portions of the developing inner ear. Not expressed in adult or embryonic macular sensory epithelia.

It localises to the secreted. In terms of biological role, major protein of the otoconia, a calcium carbonate structure in the saccule and utricle of the ear. Together with OTOL1, acts as a scaffold for otoconia biomineralization: sequesters calcium and forms interconnecting fibrils between otoconia that are incorporated into the calcium crystal structure. Together with OTOL1, modulates calcite crystal morphology and growth kinetics. It is unlikely that this protein has phospholipase A2 activity. The sequence is that of Otoconin-90 from Mus musculus (Mouse).